Here is a 292-residue protein sequence, read N- to C-terminus: MKGTIIKGIGGFYYIKIDNSEEIIECKARGKFRHTELTPMIGDYVEISVDKNNKGAIEKIYERRSELFRPAVANVTQALVVFSFKNPDINIDLLNKFLLLCEYNNLKAIVCFNKMDLVNKEDYKDIISMIEQAGYDIIFLNAKEERNMDIIKKLIKDNVTVFCGPSGVGKSTMLNKIIGKETMITGNISEKLKRGKHTTRHSELIYVDEGLLVDTPGFSSLDINFMEKEDLLHCIPEFRDFIGECKFTGCLHHREPNCAVKKAVEEGHIHKNRYDFYIKTLEEFMNRRKKKW.

The CP-type G domain occupies 64-221; the sequence is RSELFRPAVA…LVDTPGFSSL (158 aa). Residues 113–116 and 164–172 each bind GTP; these read NKMD and GPSGVGKST. Residues Cys-245, Cys-250, His-252, and Cys-258 each contribute to the Zn(2+) site.

It belongs to the TRAFAC class YlqF/YawG GTPase family. RsgA subfamily. Monomer. Associates with 30S ribosomal subunit, binds 16S rRNA. Requires Zn(2+) as cofactor.

It localises to the cytoplasm. One of several proteins that assist in the late maturation steps of the functional core of the 30S ribosomal subunit. Helps release RbfA from mature subunits. May play a role in the assembly of ribosomal proteins into the subunit. Circularly permuted GTPase that catalyzes slow GTP hydrolysis, GTPase activity is stimulated by the 30S ribosomal subunit. The protein is Small ribosomal subunit biogenesis GTPase RsgA of Clostridium botulinum (strain Loch Maree / Type A3).